The sequence spans 214 residues: MPSLLVVIFVIELFVQLVNTIGAATINNLLWRIALSLPLPLSAQFAAQRKKQKEYLAIRRELNATSSQDEFAKWARLRRQHDKLLEDLEKRKKELDAAKTKFDRTLTTVRVVATRGLQWFLPFWYSREPMFWLPYGWFPYYVEWFASFPRAPLGSVSIVVWQWACTGVIKLVIETVMAVVGLIVAARQKQQEKQKAKQAVPAAGGGDSKAEEAK.

Residues 1 to 4 (MPSL) are Lumenal-facing. The helical transmembrane segment at 5 to 24 (LVVIFVIELFVQLVNTIGAA) threads the bilayer. Residues 25 to 110 (TINNLLWRIA…KFDRTLTTVR (86 aa)) lie on the Cytoplasmic side of the membrane. Residues 73-107 (KWARLRRQHDKLLEDLEKRKKELDAAKTKFDRTLT) adopt a coiled-coil conformation. Residues 111 to 131 (VVATRGLQWFLPFWYSREPMF) traverse the membrane as a helical segment. Residues 132 to 155 (WLPYGWFPYYVEWFASFPRAPLGS) lie on the Lumenal side of the membrane. The chain crosses the membrane as a helical span at residues 156–172 (VSIVVWQWACTGVIKLV). Residues 173–214 (IETVMAVVGLIVAARQKQQEKQKAKQAVPAAGGGDSKAEEAK) lie on the Cytoplasmic side of the membrane. Residues 190-214 (QQEKQKAKQAVPAAGGGDSKAEEAK) are disordered.

It belongs to the WRB/GET1 family. As to quaternary structure, interacts with GET3.

The protein localises to the endoplasmic reticulum membrane. Its function is as follows. Required for the post-translational delivery of tail-anchored (TA) proteins to the endoplasmic reticulum. Acts as a membrane receptor for soluble GET3, which recognizes and selectively binds the transmembrane domain of TA proteins in the cytosol. The chain is Protein get-1 (get-1) from Neurospora crassa (strain ATCC 24698 / 74-OR23-1A / CBS 708.71 / DSM 1257 / FGSC 987).